A 310-amino-acid chain; its full sequence is Very-long-chain enoyl-CoA reductase (310 aa).

Residues 1-85 (MPITIKSRSK…KDLGPQISWR (85 aa)) lie on the Cytoplasmic side of the membrane. Residues 86–106 (LVFFCEYLGPVLVHSLFYYLS) traverse the membrane as a helical segment. Residues 107–141 (TIPTVVDRWHSASSDYNPFLNRVAYFLILGHYGKR) lie on the Lumenal side of the membrane. Residues 142-162 (LFETLFVHQFSLATMPIFNLF) form a helical membrane-spanning segment. The Cytoplasmic segment spans residues 163-165 (KNC). The helical transmembrane segment at 166-186 (FHYWVLSGLISFGYFGYGFPF) threads the bilayer. Topologically, residues 187 to 201 (GNAKLFKYYSYLKLD) are lumenal. Residues 202–222 (DLSTLIGLFVLSELWNFYCHI) form a helical membrane-spanning segment. The Cytoplasmic segment spans residues 223–242 (KLRLWGDYQKKHGNAKIRVP). The chain crosses the membrane as a helical span at residues 243–265 (LNQGIFNLFVAPNYTFEVWSWIW). Topologically, residues 266 to 268 (FTF) are lumenal. The helical transmembrane segment at 269–291 (VFKFNLFAVLFLTVSTAQMYAWA) threads the bilayer. Topologically, residues 292–310 (QKKNKKYHTRRAFLIPFVF) are cytoplasmic.

Belongs to the steroid 5-alpha reductase family. In terms of assembly, interacts with the fatty acid elongation system components ELO2 and ELO3. Interacts with NVJ1.

The protein localises to the endoplasmic reticulum membrane. The catalysed reaction is a very-long-chain 2,3-saturated fatty acyl-CoA + NADP(+) = a very-long-chain (2E)-enoyl-CoA + NADPH + H(+). It carries out the reaction octadecanoyl-CoA + NADP(+) = (2E)-octadecenoyl-CoA + NADPH + H(+). It catalyses the reaction (2E)-eicosenoyl-CoA + NADPH + H(+) = eicosanoyl-CoA + NADP(+). The enzyme catalyses (2E)-docosenoyl-CoA + NADPH + H(+) = docosanoyl-CoA + NADP(+). The catalysed reaction is (2E)-tetracosenoyl-CoA + NADPH + H(+) = tetracosanoyl-CoA + NADP(+). It carries out the reaction (2E)-hexacosenoyl-CoA + NADPH + H(+) = hexacosanoyl-CoA + NADP(+). The protein operates within lipid metabolism; fatty acid biosynthesis. In terms of biological role, catalyzes the last of the four reactions of the long-chain fatty acids elongation cycle. This endoplasmic reticulum-bound enzymatic process, allows the addition of 2 carbons to the chain of long- and very long-chain fatty acids/VLCFAs per cycle. This enzyme reduces the trans-2,3-enoyl-CoA fatty acid intermediate to an acyl-CoA that can be further elongated by entering a new cycle of elongation. Thereby, it participates in the production of VLCFAs of different chain lengths that are involved in multiple biological processes as precursors of membrane lipids and lipid mediators. VLCFAs serve for instance as precursors for ceramide and sphingolipids. Required for normal biogenesis of piecemeal microautophagy of the nucleus (PMN) bleps and vesicles during nutrient stress. The sequence is that of Very-long-chain enoyl-CoA reductase (TSC13) from Saccharomyces cerevisiae (strain ATCC 204508 / S288c) (Baker's yeast).